Reading from the N-terminus, the 452-residue chain is Protein CLT3, chloroplastic (452 aa).

The transit peptide at 1-34 (MATTSRRFTTGLFASITSVKSHSANRPQSISLIR) directs the protein to the chloroplast. Helical transmembrane passes span 105–125 (AEIVIWAAVTAAFGVGNRVMY), 137–157 (FFLAQLSTFGYVAVYYTILYF), 175–195 (PFLIVGILEALAAAAGMAAAA), 202–222 (TTVLSQTFLVWQIFFSIIFLG), 230–250 (ILGCTLVALGVIVSVASGSGA), 258–278 (GVLWILLMVLSFLLQGAGTVL), 307–327 (FQAICIALLLPFLSKLWGIPF), 353–373 (GAPFLPLLFVIMNIGYNIALL), 389–409 (TVSVPIAVFLFTMPLPYLGVA), and 412–432 (LPKGFMGGTIILVLGMILYSW).

This sequence belongs to the CRT-like transporter family.

It is found in the plastid. It localises to the chloroplast membrane. Involved in thiol transport from the plastid to the cytosol. Transports probably both glutathione (GSH) and its precursor, gamma-glutamylcysteine (gamma-EC). Exhibits some functional redundancy with CLT1 in maintaining the root GSH pool. The protein is Protein CLT3, chloroplastic of Arabidopsis thaliana (Mouse-ear cress).